The chain runs to 1783 residues: 6-methylsalicylic acid synthase (1783 aa).

Residues 1–31 are compositionally biased toward polar residues; sequence MITSTSSTEVLTPANGSDDSKGTTTPATSSG. Positions 1–40 are disordered; that stretch reads MITSTSSTEVLTPANGSDDSKGTTTPATSSGDPEMHDDLL. A Ketosynthase family 3 (KS3) domain is found at 45–474; it reads HDDVAIIGMA…GTVSHAIIEA (430 aa). Catalysis depends on for beta-ketoacyl synthase activity residues C217, H352, and H394. The segment at 587–884 is malonyl-CoA:ACP transacylase (MAT) domain; the sequence is WVFSGHGAQW…TPTMVRKQPA (298 aa). S673 functions as the For acyl/malonyl transferase activity in the catalytic mechanism. Residues 942–1215 are product template (PT) domain; the sequence is THKPAANDLL…AFAGVEGESL (274 aa). The N-terminal hotdog fold stretch occupies residues 948 to 1064; it reads NDLLGTRTAL…ATVGADATPS (117 aa). The PKS/mFAS DH domain occupies 948 to 1216; that stretch reads NDLLGTRTAL…FAGVEGESLS (269 aa). H980 (proton acceptor; for dehydratase activity) is an active-site residue. The tract at residues 1078–1216 is C-terminal hotdog fold; the sequence is PQKLSDSFSI…FAGVEGESLS (139 aa). D1130 functions as the Proton donor; for dehydratase activity in the catalytic mechanism. A Carrier domain is found at 1707–1781; the sequence is EYVLVVVKKC…HLVEYFCQVL (75 aa). Residue S1741 is modified to O-(pantetheine 4'-phosphoryl)serine.

The catalysed reaction is 3 malonyl-CoA + acetyl-CoA + NADPH + 3 H(+) = 6-methylsalicylate + 3 CO2 + NADP(+) + 4 CoA + H2O. The protein operates within secondary metabolite biosynthesis; terpenoid biosynthesis. In terms of biological role, non-reducing polyketide synthase; part of the gene cluster that mediates the biosynthesis of macrophorins, isoprenoid epoxycyclohexenones containing cyclized drimane moieties. The first step of the pathway is the synthesis of 6-methylsalicylic acid (6-MSA) by the polyketide synthase macA. 6-MSA is then converted to m-cresol by the decarboxylase macB. The cytochrome P450 monooxygenase macC then catalyzes the oxidation of m-cresol to toluquinol. Epoxidation of toluquinol is then performed by the short chain dehydrogenase macD, with the help of macE, and a further prenylation by macG leads to 7-deacetoxyyanuthone A. The next step is the hydroxylation of C-22 of 7-deacetoxyyanuthone A by the cytochrome P450 monooxygenase macH to yield 22-deacetylyanuthone A. O-Mevalon transferase macI then attaches mevalon to the hydroxyl group of 22-deacetylyanuthone A to produce yanuthone E. The terpene cyclase macJ catalyzes the cyclization of 22-deacetylyanuthone A to macrophorin A. MacJ is also able to catalyze cyclization of yanuthone E and 7-deacetoxyyanuthone A to their corresponding macrophorins. The macJ products can be further modified by macH and macJ, as well as by the FAD-dependent monooxygenase macF, to produce additional macrophorins, including 4'-oxomacrophorin A, 4'-oxomacrophorin D and 4'-oxomacrophorin E. The chain is 6-methylsalicylic acid synthase from Penicillium terrestre.